Reading from the N-terminus, the 266-residue chain is Hydroxyethylthiazole kinase (266 aa).

M39 lines the substrate pocket. ATP-binding residues include K115 and T160. G187 serves as a coordination point for substrate.

The protein belongs to the Thz kinase family. It depends on Mg(2+) as a cofactor.

It carries out the reaction 5-(2-hydroxyethyl)-4-methylthiazole + ATP = 4-methyl-5-(2-phosphooxyethyl)-thiazole + ADP + H(+). Its pathway is cofactor biosynthesis; thiamine diphosphate biosynthesis; 4-methyl-5-(2-phosphoethyl)-thiazole from 5-(2-hydroxyethyl)-4-methylthiazole: step 1/1. Catalyzes the phosphorylation of the hydroxyl group of 4-methyl-5-beta-hydroxyethylthiazole (THZ). In Staphylococcus aureus (strain MSSA476), this protein is Hydroxyethylthiazole kinase.